The chain runs to 142 residues: Neuritin (142 aa).

Positions 1 to 27 (MGLKLNGRYISLILAVQIAYLVQAVRA) are cleaved as a signal peptide. Residue Gly116 is the site of GPI-anchor amidated glycine attachment. The propeptide at 117 to 142 (AAGPLLPALPVLLVSLSAALATWLSF) is removed in mature form.

It belongs to the neuritin family. As to quaternary structure, component of the outer core of AMPAR complex. AMPAR complex consists of an inner core made of 4 pore-forming GluA/GRIA proteins (GRIA1, GRIA2, GRIA3 and GRIA4) and 4 major auxiliary subunits arranged in a twofold symmetry. One of the two pairs of distinct binding sites is occupied either by CNIH2, CNIH3 or CACNG2, CACNG3. The other harbors CACNG2, CACNG3, CACNG4, CACNG8 or GSG1L. This inner core of AMPAR complex is complemented by outer core constituents binding directly to the GluA/GRIA proteins at sites distinct from the interaction sites of the inner core constituents. Outer core constituents include at least PRRT1, PRRT2, CKAMP44/SHISA9, FRRS1L and NRN1. The proteins of the inner and outer core serve as a platform for other, more peripherally associated AMPAR constituents. Alone or in combination, these auxiliary subunits control the gating and pharmacology of the AMPAR complex and profoundly impact their biogenesis and protein processing.

The protein resides in the cell membrane. The protein localises to the synapse. Its function is as follows. Promotes neurite outgrowth and especially branching of neuritic processes in primary hippocampal and cortical cells. This chain is Neuritin (NRN1), found in Bos taurus (Bovine).